Here is a 98-residue protein sequence, read N- to C-terminus: NADH-ubiquinone oxidoreductase chain 4L (98 aa).

The next 3 helical transmembrane spans lie at 1 to 21 (MSLVHMNIALAFTVALLGLLM), 29 to 49 (SLLCLEGMMLTLFIMGTIMIL), and 61 to 81 (IILLVFAACEAAVGLSLLVMV).

It belongs to the complex I subunit 4L family. In terms of assembly, core subunit of respiratory chain NADH dehydrogenase (Complex I) which is composed of 45 different subunits.

It localises to the mitochondrion inner membrane. The catalysed reaction is a ubiquinone + NADH + 5 H(+)(in) = a ubiquinol + NAD(+) + 4 H(+)(out). In terms of biological role, core subunit of the mitochondrial membrane respiratory chain NADH dehydrogenase (Complex I) which catalyzes electron transfer from NADH through the respiratory chain, using ubiquinone as an electron acceptor. Part of the enzyme membrane arm which is embedded in the lipid bilayer and involved in proton translocation. In Sorex unguiculatus (Long-clawed shrew), this protein is NADH-ubiquinone oxidoreductase chain 4L (MT-ND4L).